Here is a 391-residue protein sequence, read N- to C-terminus: Superoxide dismutase [Fe] 1, chloroplastic (391 aa).

Residues 1 to 73 (MAFATLVGVG…GESTNSRVLQ (73 aa)) constitute a chloroplast transit peptide. Residues 87–119 (VNDGIDDETASDAEMDEDAEANGDESSGTDEDA) show a composition bias toward acidic residues. Residues 87–120 (VNDGIDDETASDAEMDEDAEANGDESSGTDEDAS) form a disordered region. Fe cation contacts are provided by H148, H202, D301, and H305. Residues 370–391 (MPQQVNGDAREQTSGQEKSLGV) are disordered. Residues 381-391 (QTSGQEKSLGV) show a composition bias toward polar residues.

This sequence belongs to the iron/manganese superoxide dismutase family. In terms of assembly, homodimer. Requires Fe cation as cofactor.

The protein resides in the plastid. It is found in the chloroplast. It catalyses the reaction 2 superoxide + 2 H(+) = H2O2 + O2. In terms of biological role, destroys superoxide anion radicals which are normally produced within the cells and which are toxic to biological systems. The sequence is that of Superoxide dismutase [Fe] 1, chloroplastic from Oryza sativa subsp. japonica (Rice).